The following is a 777-amino-acid chain: Cyclin-F (777 aa).

The short motif at 20–28 (KRRIKRRPR) is the Nuclear localization signal 1 element. One can recognise an F-box domain in the interval 29 to 76 (NLTILSLPEDVLFHILKWLSVGDILAVRAVHSHLKYLVDNHASVWASA). The 118-residue stretch at 288-405 (QASQAVNKQQ…EIISALEGKI (118 aa)) folds into the Cyclin N-terminal domain. 3 short sequence motifs (d box) span residues 310–313 (RYIL), 343–346 (RRRL), and 349–352 (RYKL). Disordered regions lie at residues 544 to 591 (QESP…TPTA) and 651 to 777 (QESS…HLAS). The Nuclear localization signal 2 signature appears at 568–574 (RRSKRKR). Residues 582-761 (RGSFVTTPTA…ESGVHQQPVK (180 aa)) are PEST. Low complexity-rich tracts occupy residues 695–708 (SGYSSVSSSSPISS) and 719–731 (STSVLSVGSHSST). Over residues 751–767 (PESGVHQQPVKRQNLSV) the composition is skewed to polar residues. Positions 762–765 (RQNL) match the D box 4 motif. Residues 768 to 777 (HSDKDMHLAS) are compositionally biased toward basic and acidic residues.

It belongs to the cyclin family. Cyclin AB subfamily. As to quaternary structure, component of the SCF(CCNF) complex consisting of CUL1, RBX1, SKP1 and CCNF. Interacts with SKP1. Interacts with CUL1. Interacts with CCNB1; interaction is required for nuclear localization of CCNB1. Interacts with CCP110; this interaction leads to CCP110 ubiquitination and degradation via the proteasome pathway. Interacts (via the Cyclin N-terminal domain) with MYBL2/BMYB. Interacts with FZR1/CDH1 (via N-terminus). Interacts with RRM2 (via Cy motif and when phosphorylated at 'Thr-33'); the interaction occurs exclusively in G2 and early M. Interacts with CDC6 (via Cy motif); the interaction takes place during G2 and M phase. Degraded when the spindle assembly checkpoint is activated during the G2-M transition. Degradation is not dependent on the proteasome or ubiquitin and depends on the C-terminal PEST sequence. Post-translationally, phosphorylated just before cells enter into mitosis. In terms of processing, ubiquitinated by the anaphase-promoting complex (APC/C); leading to its degradation by the proteasome.

The protein localises to the nucleus. The protein resides in the cytoplasm. It localises to the perinuclear region. Its subcellular location is the cytoskeleton. It is found in the microtubule organizing center. The protein localises to the centrosome. The protein resides in the centriole. Its function is as follows. Substrate recognition component of a SCF (SKP1-CUL1-F-box protein) E3 ubiquitin-protein ligase complex which mediates the ubiquitination and subsequent proteasomal degradation of target proteins. The SCF(CCNF) E3 ubiquitin-protein ligase complex is an integral component of the ubiquitin proteasome system (UPS) and links proteasome degradation to the cell cycle. Mediates the substrate recognition and the proteasomal degradation of various target proteins involved in the regulation of cell cycle progression and in the maintenance of genome stability. Mediates the ubiquitination and subsequent proteasomal degradation of CP110 during G2 phase, thereby acting as an inhibitor of centrosome reduplication. In G2, mediates the ubiquitination and proteasomal degradation of CDC6, thereby suppressing DNA re-replication and preventing genome instability. Involved in the ubiquitination and degradation of the substrate adapter CDH1 of the anaphase-promoting complex (APC/C), thereby acting as an antagonist of APC/C in regulating G1 progression and S phase entry. May play a role in the G2 cell cycle checkpoint control after DNA damage, possibly by promoting the ubiquitination of MYBL2/BMYB. This Mus musculus (Mouse) protein is Cyclin-F (Ccnf).